The sequence spans 250 residues: 23S rRNA (guanosine-2'-O-)-methyltransferase RlmB (250 aa).

Positions 198, 218, and 227 each coordinate S-adenosyl-L-methionine.

It belongs to the class IV-like SAM-binding methyltransferase superfamily. RNA methyltransferase TrmH family. RlmB subfamily.

The protein localises to the cytoplasm. The catalysed reaction is guanosine(2251) in 23S rRNA + S-adenosyl-L-methionine = 2'-O-methylguanosine(2251) in 23S rRNA + S-adenosyl-L-homocysteine + H(+). Specifically methylates the ribose of guanosine 2251 in 23S rRNA. This chain is 23S rRNA (guanosine-2'-O-)-methyltransferase RlmB, found in Coxiella burnetii (strain RSA 493 / Nine Mile phase I).